The sequence spans 821 residues: Probable phosphoenolpyruvate synthase (821 aa).

The active-site Tele-phosphohistidine intermediate is His444. 7 residues coordinate substrate: Arg543, Arg590, Glu687, Gly709, Thr710, Asn711, and Asp712. Position 687 (Glu687) interacts with Mg(2+). Asp712 is a binding site for Mg(2+). Cys759 acts as the Proton donor in catalysis.

This sequence belongs to the PEP-utilizing enzyme family. Mg(2+) serves as cofactor.

The enzyme catalyses pyruvate + ATP + H2O = phosphoenolpyruvate + AMP + phosphate + 2 H(+). It participates in carbohydrate biosynthesis; gluconeogenesis. Its function is as follows. Catalyzes the phosphorylation of pyruvate to phosphoenolpyruvate. This is Probable phosphoenolpyruvate synthase (ppsA) from Pyrococcus horikoshii (strain ATCC 700860 / DSM 12428 / JCM 9974 / NBRC 100139 / OT-3).